Consider the following 363-residue polypeptide: MQLPISQYNELLQKKLEKLTALLHPFNAPDIQVFDSPTSHYRMRAEFRIWHEQDDFYHIMFDQATLQRYRVDEFPIASMLINRMMQTLLPLLKQQEVLHKKLFQIDYLSTLSNKIIVSLLYHKTLTEEWESAAKNLKDLLEKQDFDVQIIGRASKQKICFEQDYVDEVLPVNGRNYVYRQVENSFTQPNATVNCKMLEWAIDCTQNSEGDLLELYCGNGNFSIALAQNFRKVLATEIAKPSVAAAQFNIAENKVDNLQIIRMSAEEFTQAMNGVRAFNRLKGIDLKSYECNTIFVDPPRAGLDPDTVKLVQNYDRILYISCNPHTLCDNLVELSKTHRIEKAALFDQFPYTDHMESGLWLIRK.

Glutamine 187, tyrosine 215, asparagine 220, glutamate 236, and aspartate 296 together coordinate S-adenosyl-L-methionine. The active-site Nucleophile is cysteine 321. Glutamate 355 functions as the Proton acceptor in the catalytic mechanism.

This sequence belongs to the class I-like SAM-binding methyltransferase superfamily. RNA M5U methyltransferase family. TrmA subfamily.

The enzyme catalyses uridine(54) in tRNA + S-adenosyl-L-methionine = 5-methyluridine(54) in tRNA + S-adenosyl-L-homocysteine + H(+). The catalysed reaction is uridine(341) in tmRNA + S-adenosyl-L-methionine = 5-methyluridine(341) in tmRNA + S-adenosyl-L-homocysteine + H(+). Its function is as follows. Dual-specificity methyltransferase that catalyzes the formation of 5-methyluridine at position 54 (m5U54) in all tRNAs, and that of position 341 (m5U341) in tmRNA (transfer-mRNA). In Haemophilus influenzae (strain 86-028NP), this protein is tRNA/tmRNA (uracil-C(5))-methyltransferase.